A 146-amino-acid chain; its full sequence is Large ribosomal subunit protein uL15 (146 aa).

A disordered region spans residues 1 to 51; the sequence is MKLHELQPAPGSRKKAVRVGRGIGSGNGKTSGRGQKGQNARSGGGVRLGFE. 2 stretches are compositionally biased toward gly residues: residues 21–35 and 42–51; these read RGIGSGNGKTSGRGQ and SGGGVRLGFE.

The protein belongs to the universal ribosomal protein uL15 family. As to quaternary structure, part of the 50S ribosomal subunit.

In terms of biological role, binds to the 23S rRNA. The protein is Large ribosomal subunit protein uL15 of Geobacillus kaustophilus (strain HTA426).